The chain runs to 179 residues: Protein LDB18 (179 aa).

May be involved in protein-linked oligosaccharide phosphorylation since the deletion reduces the negative charge of the cell surface. The protein is Protein LDB18 (LDB18) of Saccharomyces cerevisiae (strain ATCC 204508 / S288c) (Baker's yeast).